The sequence spans 141 residues: Nucleoside diphosphate kinase (141 aa).

6 residues coordinate ATP: Lys11, Phe59, Arg87, Thr93, Arg104, and Asn114. The active-site Pros-phosphohistidine intermediate is His117.

It belongs to the NDK family. As to quaternary structure, homotetramer. The cofactor is Mg(2+).

The protein resides in the cytoplasm. The catalysed reaction is a 2'-deoxyribonucleoside 5'-diphosphate + ATP = a 2'-deoxyribonucleoside 5'-triphosphate + ADP. It catalyses the reaction a ribonucleoside 5'-diphosphate + ATP = a ribonucleoside 5'-triphosphate + ADP. Major role in the synthesis of nucleoside triphosphates other than ATP. The ATP gamma phosphate is transferred to the NDP beta phosphate via a ping-pong mechanism, using a phosphorylated active-site intermediate. The sequence is that of Nucleoside diphosphate kinase from Pseudomonas syringae pv. tomato (strain ATCC BAA-871 / DC3000).